A 1420-amino-acid polypeptide reads, in one-letter code: DNA-directed RNA polymerase subunit beta' (1420 aa).

Residues C71, C73, C86, and C89 each coordinate Zn(2+). D461, D463, and D465 together coordinate Mg(2+). Residues C815, C889, C896, and C899 each contribute to the Zn(2+) site.

Belongs to the RNA polymerase beta' chain family. The RNAP catalytic core consists of 2 alpha, 1 beta, 1 beta' and 1 omega subunit. When a sigma factor is associated with the core the holoenzyme is formed, which can initiate transcription. It depends on Mg(2+) as a cofactor. Zn(2+) serves as cofactor.

It carries out the reaction RNA(n) + a ribonucleoside 5'-triphosphate = RNA(n+1) + diphosphate. DNA-dependent RNA polymerase catalyzes the transcription of DNA into RNA using the four ribonucleoside triphosphates as substrates. In Histophilus somni (strain 2336) (Haemophilus somnus), this protein is DNA-directed RNA polymerase subunit beta'.